The following is a 504-amino-acid chain: Cobyric acid synthase (504 aa).

One can recognise a GATase cobBQ-type domain in the interval 254 to 442 (AIDVAVIRYP…MHDLFHNDMF (189 aa)). The Nucleophile role is filled by Cys336. His434 is an active-site residue.

It belongs to the CobB/CobQ family. CobQ subfamily.

It participates in cofactor biosynthesis; adenosylcobalamin biosynthesis. Catalyzes amidations at positions B, D, E, and G on adenosylcobyrinic A,C-diamide. NH(2) groups are provided by glutamine, and one molecule of ATP is hydrogenolyzed for each amidation. The protein is Cobyric acid synthase of Anoxybacillus flavithermus (strain DSM 21510 / WK1).